The following is a 39-amino-acid chain: Photosystem II reaction center protein L (39 aa).

Residues 18–38 (SLYLGLLLVFVTGVLFSSYFF) form a helical membrane-spanning segment.

The protein belongs to the PsbL family. PSII is composed of 1 copy each of membrane proteins PsbA, PsbB, PsbC, PsbD, PsbE, PsbF, PsbH, PsbI, PsbJ, PsbK, PsbL, PsbM, PsbT, PsbX, PsbY, PsbZ, Psb30/Ycf12, at least 3 peripheral proteins of the oxygen-evolving complex and a large number of cofactors. It forms dimeric complexes.

It localises to the plastid. The protein localises to the organellar chromatophore thylakoid membrane. In terms of biological role, one of the components of the core complex of photosystem II (PSII). PSII is a light-driven water:plastoquinone oxidoreductase that uses light energy to abstract electrons from H(2)O, generating O(2) and a proton gradient subsequently used for ATP formation. It consists of a core antenna complex that captures photons, and an electron transfer chain that converts photonic excitation into a charge separation. This subunit is found at the monomer-monomer interface and is required for correct PSII assembly and/or dimerization. The chain is Photosystem II reaction center protein L from Paulinella chromatophora.